A 541-amino-acid chain; its full sequence is Catalase (541 aa).

Residues Met-1–Gln-20 are disordered. Catalysis depends on residues His-74 and Asn-147. Residue Tyr-357 coordinates heme.

It belongs to the catalase family. Heme is required as a cofactor.

It is found in the peroxisome matrix. The catalysed reaction is 2 H2O2 = O2 + 2 H2O. Catalyzes the degradation of hydrogen peroxide (H(2)O(2)) generated by peroxisomal oxidases to water and oxygen, thereby protecting cells from the toxic effects of hydrogen peroxide. The protein is Catalase (CAT) of Ascaris suum (Pig roundworm).